The following is a 432-amino-acid chain: 2-oxoglutarate-dependent dioxygenase AOP2 (432 aa).

The 98-residue stretch at Ser-281–Pro-378 folds into the Fe2OG dioxygenase domain. The Fe cation site is built by His-301, Asp-303, and His-358. Arg-369 is a binding site for 2-oxoglutarate.

Belongs to the iron/ascorbate-dependent oxidoreductase family. Fe(2+) is required as a cofactor.

Functionally, 2-oxoglutarate-dependent dioxygenase involved in glucosinolates biosynthesis. Catalyzes the conversion of methylsulfinylalkyl glucosinolates to alkenyl glucosinolates. The protein is 2-oxoglutarate-dependent dioxygenase AOP2 (AOP2) of Arabidopsis thaliana (Mouse-ear cress).